The following is an 83-amino-acid chain: Weak toxin DE-1 homolog 1 (83 aa).

The N-terminal stretch at 1–21 is a signal peptide; it reads MKPVLLTLVVVTIVCLDLGYT. Disulfide bonds link C24/C45, C38/C62, C64/C75, and C76/C81.

This sequence belongs to the three-finger toxin family. Short-chain subfamily. Type I alpha-neurotoxin sub-subfamily. As to expression, expressed by the venom gland.

The protein resides in the secreted. Its function is as follows. Binds to muscle nicotinic acetylcholine receptor (nAChR) and inhibit acetylcholine from binding to the receptor, thereby impairing neuromuscular transmission. In Ophiophagus hannah (King cobra), this protein is Weak toxin DE-1 homolog 1.